The chain runs to 365 residues: UDP-N-acetylglucosamine--N-acetylmuramyl-(pentapeptide) pyrophosphoryl-undecaprenol N-acetylglucosamine transferase (365 aa).

UDP-N-acetyl-alpha-D-glucosamine-binding positions include 12–14 (TGG), Asn-123, Arg-166, Ser-194, and Gln-295.

It belongs to the glycosyltransferase 28 family. MurG subfamily.

The protein resides in the cell inner membrane. It catalyses the reaction di-trans,octa-cis-undecaprenyl diphospho-N-acetyl-alpha-D-muramoyl-L-alanyl-D-glutamyl-meso-2,6-diaminopimeloyl-D-alanyl-D-alanine + UDP-N-acetyl-alpha-D-glucosamine = di-trans,octa-cis-undecaprenyl diphospho-[N-acetyl-alpha-D-glucosaminyl-(1-&gt;4)]-N-acetyl-alpha-D-muramoyl-L-alanyl-D-glutamyl-meso-2,6-diaminopimeloyl-D-alanyl-D-alanine + UDP + H(+). It functions in the pathway cell wall biogenesis; peptidoglycan biosynthesis. Its function is as follows. Cell wall formation. Catalyzes the transfer of a GlcNAc subunit on undecaprenyl-pyrophosphoryl-MurNAc-pentapeptide (lipid intermediate I) to form undecaprenyl-pyrophosphoryl-MurNAc-(pentapeptide)GlcNAc (lipid intermediate II). The polypeptide is UDP-N-acetylglucosamine--N-acetylmuramyl-(pentapeptide) pyrophosphoryl-undecaprenol N-acetylglucosamine transferase (Phenylobacterium zucineum (strain HLK1)).